The chain runs to 359 residues: Membrane-bound lytic murein transglycosylase C (359 aa).

Residues 1–16 (MKKYLALALIAPLLIS) form the signal peptide. Cys-17 carries N-palmitoyl cysteine lipidation. The S-diacylglycerol cysteine moiety is linked to residue Cys-17.

Belongs to the transglycosylase Slt family.

Its subcellular location is the cell outer membrane. The catalysed reaction is Exolytic cleavage of the (1-&gt;4)-beta-glycosidic linkage between N-acetylmuramic acid (MurNAc) and N-acetylglucosamine (GlcNAc) residues in peptidoglycan, from either the reducing or the non-reducing ends of the peptidoglycan chains, with concomitant formation of a 1,6-anhydrobond in the MurNAc residue.. Functionally, murein-degrading enzyme. May play a role in recycling of muropeptides during cell elongation and/or cell division. This chain is Membrane-bound lytic murein transglycosylase C, found in Escherichia coli O139:H28 (strain E24377A / ETEC).